Consider the following 139-residue polypeptide: Probable DNA-binding protein (139 aa).

The segment at 97–139 (DEPSREASPDLGAAGAELEDESAQAGAVQGPETLRSQVLRART) is disordered.

This is Probable DNA-binding protein from Homo sapiens (Human).